The sequence spans 131 residues: UPF0102 protein Ent638_3585 (131 aa).

A disordered region spans residues M1 to G20.

The protein belongs to the UPF0102 family.

The sequence is that of UPF0102 protein Ent638_3585 from Enterobacter sp. (strain 638).